Reading from the N-terminus, the 332-residue chain is Transaldolase (332 aa).

The active-site Schiff-base intermediate with substrate is the Lys135.

Belongs to the transaldolase family. Type 1 subfamily. As to quaternary structure, homodimer.

Its subcellular location is the cytoplasm. It carries out the reaction D-sedoheptulose 7-phosphate + D-glyceraldehyde 3-phosphate = D-erythrose 4-phosphate + beta-D-fructose 6-phosphate. It functions in the pathway carbohydrate degradation; pentose phosphate pathway; D-glyceraldehyde 3-phosphate and beta-D-fructose 6-phosphate from D-ribose 5-phosphate and D-xylulose 5-phosphate (non-oxidative stage): step 2/3. In terms of biological role, transaldolase is important for the balance of metabolites in the pentose-phosphate pathway. This chain is Transaldolase, found in Prochlorococcus marinus (strain NATL1A).